The sequence spans 283 residues: tRNA-cytidine(32) 2-sulfurtransferase (283 aa).

The PP-loop motif signature appears at Ser32 to Ser37. Cys107, Cys110, and Cys198 together coordinate [4Fe-4S] cluster.

It belongs to the TtcA family. Homodimer. Mg(2+) serves as cofactor. [4Fe-4S] cluster is required as a cofactor.

Its subcellular location is the cytoplasm. The enzyme catalyses cytidine(32) in tRNA + S-sulfanyl-L-cysteinyl-[cysteine desulfurase] + AH2 + ATP = 2-thiocytidine(32) in tRNA + L-cysteinyl-[cysteine desulfurase] + A + AMP + diphosphate + H(+). The protein operates within tRNA modification. In terms of biological role, catalyzes the ATP-dependent 2-thiolation of cytidine in position 32 of tRNA, to form 2-thiocytidine (s(2)C32). The sulfur atoms are provided by the cysteine/cysteine desulfurase (IscS) system. The polypeptide is tRNA-cytidine(32) 2-sulfurtransferase (Sorangium cellulosum (strain So ce56) (Polyangium cellulosum (strain So ce56))).